A 77-amino-acid polypeptide reads, in one-letter code: Acyl carrier protein (77 aa).

The 76-residue stretch at 2 to 77 (SNIEERVKKI…AAIDYVSKNQ (76 aa)) folds into the Carrier domain. Ser-37 is modified (O-(pantetheine 4'-phosphoryl)serine).

This sequence belongs to the acyl carrier protein (ACP) family. 4'-phosphopantetheine is transferred from CoA to a specific serine of apo-ACP by AcpS. This modification is essential for activity because fatty acids are bound in thioester linkage to the sulfhydryl of the prosthetic group.

It is found in the cytoplasm. Its pathway is lipid metabolism; fatty acid biosynthesis. In terms of biological role, carrier of the growing fatty acid chain in fatty acid biosynthesis. The chain is Acyl carrier protein from Shewanella oneidensis (strain ATCC 700550 / JCM 31522 / CIP 106686 / LMG 19005 / NCIMB 14063 / MR-1).